The chain runs to 140 residues: Sex-regulated protein janus-B (140 aa).

Arg-42 provides a ligand contact to substrate. His-69 acts as the Proton acceptor in catalysis. 110–112 (SRT) lines the substrate pocket.

The protein belongs to the janus family.

In terms of biological role, janA and janB regulate somatic sex differentiation. The chain is Sex-regulated protein janus-B (janB) from Drosophila simulans (Fruit fly).